The following is a 28-amino-acid chain: Heat shock protein 81 (28 aa).

Asn5 and Asp21 together coordinate ATP.

This sequence belongs to the heat shock protein 90 family. Homodimer.

Its subcellular location is the cytoplasm. Functionally, putative molecular chaperone that may promote the maturation, structural maintenance and proper regulation of specific target proteins. This chain is Heat shock protein 81, found in Pseudotsuga menziesii (Douglas-fir).